Reading from the N-terminus, the 114-residue chain is Large ribosomal subunit protein uL22c (114 aa).

This sequence belongs to the universal ribosomal protein uL22 family. In terms of assembly, part of the 50S ribosomal subunit.

Its subcellular location is the plastid. It is found in the cyanelle. Functionally, this protein binds specifically to 23S rRNA. In terms of biological role, the globular domain of the protein is located near the polypeptide exit tunnel on the outside of the subunit, while an extended beta-hairpin is found that lines the wall of the exit tunnel in the center of the 70S ribosome. This Cyanophora paradoxa protein is Large ribosomal subunit protein uL22c (rpl22).